The chain runs to 212 residues: Probable nicotinate-nucleotide adenylyltransferase (212 aa).

The protein belongs to the NadD family.

It catalyses the reaction nicotinate beta-D-ribonucleotide + ATP + H(+) = deamido-NAD(+) + diphosphate. It functions in the pathway cofactor biosynthesis; NAD(+) biosynthesis; deamido-NAD(+) from nicotinate D-ribonucleotide: step 1/1. Its function is as follows. Catalyzes the reversible adenylation of nicotinate mononucleotide (NaMN) to nicotinic acid adenine dinucleotide (NaAD). The protein is Probable nicotinate-nucleotide adenylyltransferase of Shewanella sp. (strain MR-7).